The primary structure comprises 659 residues: UvrABC system protein B (659 aa).

Residues 25 to 182 (QSIENGNRGQ…KKLIEIQYER (158 aa)) enclose the Helicase ATP-binding domain. 38-45 (GVTGSGKT) serves as a coordination point for ATP. Residues 91–114 (YYDYYQPEAYVPQTDTFIEKDASI) carry the Beta-hairpin motif. The Helicase C-terminal domain maps to 429-582 (QIDDLYGEIQ…QMEYNEEHNI (154 aa)). In terms of domain architecture, UVR spans 622 to 657 (EKLIEQYEEEMKEAAKNLQFERAAELRDIIKDLKEN).

It belongs to the UvrB family. In terms of assembly, forms a heterotetramer with UvrA during the search for lesions. Interacts with UvrC in an incision complex.

The protein resides in the cytoplasm. In terms of biological role, the UvrABC repair system catalyzes the recognition and processing of DNA lesions. A damage recognition complex composed of 2 UvrA and 2 UvrB subunits scans DNA for abnormalities. Upon binding of the UvrA(2)B(2) complex to a putative damaged site, the DNA wraps around one UvrB monomer. DNA wrap is dependent on ATP binding by UvrB and probably causes local melting of the DNA helix, facilitating insertion of UvrB beta-hairpin between the DNA strands. Then UvrB probes one DNA strand for the presence of a lesion. If a lesion is found the UvrA subunits dissociate and the UvrB-DNA preincision complex is formed. This complex is subsequently bound by UvrC and the second UvrB is released. If no lesion is found, the DNA wraps around the other UvrB subunit that will check the other stand for damage. This is UvrABC system protein B from Clostridium perfringens (strain ATCC 13124 / DSM 756 / JCM 1290 / NCIMB 6125 / NCTC 8237 / Type A).